The primary structure comprises 327 residues: MKLNLASLCFLASIAPLVSGHYVFSKLIVDGKTTKDFEYIRENSNGYQPTLASEIVSNDFRCNKGSMESAAKTKVYTVAPGAEMGFQLAYGASMKHPGPLQIYMSKAPGDVKAYDGSGDWFKVYQEGVCNDISGGLKDTDWCTWGKDTASFKIPENTPPGQYLVRVEHIGLHRGFSGNSEFYFTCAQIEVTGSGSGVPGPLVKIPGVYKPEDPNIHFNIYHPVPTSYDLPGPSVWSGGVSDSSSSISAPPVNNAAAASSVTPTTLVTLSKTSSTPAATSSAAPTSSAPSNGTIKKYYQCGGQGWTGSGSCEAGTSCREWNTWYFQCV.

The first 20 residues, 1-20 (MKLNLASLCFLASIAPLVSG), serve as a signal peptide directing secretion. Residues His21 and His96 each coordinate Cu(2+). The cysteines at positions 62 and 185 are disulfide-linked. His172 serves as a coordination point for O2. Cu(2+) is bound at residue Tyr182. N-linked (GlcNAc...) asparagine glycosylation occurs at Asn290. The 37-residue stretch at 291 to 327 (GTIKKYYQCGGQGWTGSGSCEAGTSCREWNTWYFQCV) folds into the CBM1 domain.

It belongs to the polysaccharide monooxygenase AA9 family. Cu(2+) serves as cofactor.

Its subcellular location is the secreted. It carries out the reaction [(1-&gt;4)-beta-D-glucosyl]n+m + reduced acceptor + O2 = 4-dehydro-beta-D-glucosyl-[(1-&gt;4)-beta-D-glucosyl]n-1 + [(1-&gt;4)-beta-D-glucosyl]m + acceptor + H2O.. Its function is as follows. Lytic polysaccharide monooxygenase (LPMO) that depolymerizes crystalline and amorphous polysaccharides via the oxidation of scissile alpha- or beta-(1-4)-glycosidic bonds, yielding C1 or C4 oxidation products. Catalysis by LPMOs requires the reduction of the active-site copper from Cu(II) to Cu(I) by a reducing agent and H(2)O(2) or O(2) as a cosubstrate. This Aspergillus tamarii protein is AA9 family lytic polysaccharide monooxygenase G.